The primary structure comprises 181 residues: HGPRTase-like protein 2 (181 aa).

This sequence belongs to the purine/pyrimidine phosphoribosyltransferase family. Archaeal HPRT subfamily.

Its function is as follows. May catalyze a purine salvage reaction, the substrate is unknown. The polypeptide is HGPRTase-like protein 2 (Natrialba magadii (strain ATCC 43099 / DSM 3394 / CCM 3739 / CIP 104546 / IAM 13178 / JCM 8861 / NBRC 102185 / NCIMB 2190 / MS3) (Natronobacterium magadii)).